A 313-amino-acid polypeptide reads, in one-letter code: Ribosomal protein L11 methyltransferase (313 aa).

Thr-161, Gly-182, Asp-204, and Asn-246 together coordinate S-adenosyl-L-methionine.

It belongs to the methyltransferase superfamily. PrmA family.

It is found in the cytoplasm. It catalyses the reaction L-lysyl-[protein] + 3 S-adenosyl-L-methionine = N(6),N(6),N(6)-trimethyl-L-lysyl-[protein] + 3 S-adenosyl-L-homocysteine + 3 H(+). Methylates ribosomal protein L11. In Acetivibrio thermocellus (strain ATCC 27405 / DSM 1237 / JCM 9322 / NBRC 103400 / NCIMB 10682 / NRRL B-4536 / VPI 7372) (Clostridium thermocellum), this protein is Ribosomal protein L11 methyltransferase.